The sequence spans 88 residues: UPF0297 protein BT9727_4120 (88 aa).

This sequence belongs to the UPF0297 family.

The sequence is that of UPF0297 protein BT9727_4120 from Bacillus thuringiensis subsp. konkukian (strain 97-27).